The primary structure comprises 458 residues: Probable M18 family aminopeptidase 1 (458 aa).

Residues histidine 95, histidine 170, and histidine 434 each coordinate Zn(2+).

The protein belongs to the peptidase M18 family. Requires Zn(2+) as cofactor.

In Borreliella afzelii (strain PKo) (Borrelia afzelii), this protein is Probable M18 family aminopeptidase 1.